Consider the following 1308-residue polypeptide: Chromosome partition protein Smc (1308 aa).

34 to 41 (PNGCGKSN) contributes to the ATP binding site. A disordered region spans residues 115 to 181 (AAREASMEEV…VAEGQPSDAQ (67 aa)). Over residues 137–169 (TEAEATEQQAAPSEGAAPTTEATAPSTENEAAP) the composition is skewed to low complexity. Residues 278-600 (ITKYKTKKRL…DTLRAEYATL (323 aa)) are a coiled coil. One can recognise an SMC hinge domain in the interval 637-757 (AGVLADFLEV…VPDPAIGREL (121 aa)). 2 coiled-coil regions span residues 791–1046 (SLKR…ELHA) and 1110–1148 (MALE…EIDQ).

The protein belongs to the SMC family. Homodimer.

Its subcellular location is the cytoplasm. Functionally, required for chromosome condensation and partitioning. The protein is Chromosome partition protein Smc of Koribacter versatilis (strain Ellin345).